A 268-amino-acid polypeptide reads, in one-letter code: Fc receptor-like protein 6 (268 aa).

An N-terminal signal peptide occupies residues 1–16; sequence MLLWMVLLLCESMAEA. Residues 17–215 lie on the Extracellular side of the membrane; it reads QELFPNPELT…TAWIKSNMLP (199 aa). The 81-residue stretch at 114-194 folds into the Ig-like C2-type domain; the sequence is PVLTLQHEAT…AKNNISREIS (81 aa). An intrachain disulfide couples Cys-135 to Cys-183. Asn-180 and Asn-188 each carry an N-linked (GlcNAc...) asparagine glycan. A helical membrane pass occupies residues 216–236; the sequence is IWLPASLLGGMVIAAVVLMYF. The Cytoplasmic segment spans residues 237–268; sequence FKPCKKHARPETPTLKEPDSFLYVSVDNQRYK.

In terms of assembly, interacts with class II MHC.

The protein resides in the cell membrane. Acts as a MHC class II receptor. When stimulated on its own, does not play a role in cytokine production or the release of cytotoxic granules by NK cells and cytotoxic CD8(+) T cells. Does not act as an Fc receptor. The protein is Fc receptor-like protein 6 (Fcrl6) of Mus musculus (Mouse).